Here is a 55-residue protein sequence, read N- to C-terminus: Transcriptional regulator CdrS (55 aa).

Belongs to the CdrS family.

The protein resides in the cytoplasm. Its function is as follows. Transcriptional regulator which plays a central role in the regulation of cell division. Activates the expression of the gene encoding the cell division protein FtsZ2, and of other genes encoding proteins predicted to function in critical aspects of cell division. Required for normal cell division but not for cell elongation. May act during the transition from stasis to growth. The CdrSL-FtsZ2 transcriptional network might coordinate cell division timing with cell growth. The chain is Transcriptional regulator CdrS from Halobacterium salinarum (strain ATCC 700922 / JCM 11081 / NRC-1) (Halobacterium halobium).